Here is a 164-residue protein sequence, read N- to C-terminus: Phosphopantetheine adenylyltransferase (164 aa).

Ser-9 is a binding site for substrate. ATP is bound by residues 9 to 10 (SF) and His-17. Positions 41, 78, and 92 each coordinate substrate. Residues 93–95 (GLR), Glu-103, and 128–134 (VRTITAT) each bind ATP.

Belongs to the bacterial CoaD family. As to quaternary structure, homohexamer. Mg(2+) is required as a cofactor.

Its subcellular location is the cytoplasm. It carries out the reaction (R)-4'-phosphopantetheine + ATP + H(+) = 3'-dephospho-CoA + diphosphate. Its pathway is cofactor biosynthesis; coenzyme A biosynthesis; CoA from (R)-pantothenate: step 4/5. Reversibly transfers an adenylyl group from ATP to 4'-phosphopantetheine, yielding dephospho-CoA (dPCoA) and pyrophosphate. This chain is Phosphopantetheine adenylyltransferase, found in Brucella anthropi (strain ATCC 49188 / DSM 6882 / CCUG 24695 / JCM 21032 / LMG 3331 / NBRC 15819 / NCTC 12168 / Alc 37) (Ochrobactrum anthropi).